A 244-amino-acid chain; its full sequence is MTGSGSPCGACKFLRRRCVKGCVFAPYFCHEQGASHFAAIHQVFGASNASKLLSHLPMEDRREAATTIYYEAQARRQDPIYGCVSHIFSLQQQVVNLQTQLEILKQQATQSMMAIDSPSIENPNYYQDTKPQYLQESHDLHHHHLTTSNCQTEQNSDLKNIMTSCYHQMEIETTPFTGAGGDTMAGSYYYNSSSGCSEELKSVSTNGEFSKYSELDQHLTNTFNQYRHGGNNLISESLGYITYS.

Residues serine 6–alanine 108 enclose the LOB domain.

It belongs to the LOB domain-containing protein family. In terms of tissue distribution, expressed in roots, stems, leaves and flowers.

In Arabidopsis thaliana (Mouse-ear cress), this protein is LOB domain-containing protein 17 (LBD17).